We begin with the raw amino-acid sequence, 442 residues long: Trigger factor (442 aa).

Residues 176–259 (GDFISLSLYV…VNAVIEISSP (84 aa)) form the PPIase FKBP-type domain.

This sequence belongs to the FKBP-type PPIase family. Tig subfamily.

It is found in the cytoplasm. The enzyme catalyses [protein]-peptidylproline (omega=180) = [protein]-peptidylproline (omega=0). Involved in protein export. Acts as a chaperone by maintaining the newly synthesized protein in an open conformation. Functions as a peptidyl-prolyl cis-trans isomerase. This is Trigger factor (tig) from Chlamydia trachomatis serovar D (strain ATCC VR-885 / DSM 19411 / UW-3/Cx).